Reading from the N-terminus, the 146-residue chain is Catabolic 3-dehydroquinase (146 aa).

Catalysis depends on Tyr24, which acts as the Proton acceptor. Residues Asn78, His84, and Asp91 each contribute to the substrate site. Catalysis depends on His104, which acts as the Proton donor. Residues 105–106 and Arg115 each bind substrate; that span reads IT.

This sequence belongs to the type-II 3-dehydroquinase family. As to quaternary structure, homododecamer. Adopts a ring-like structure, composed of an arrangement of two hexameric rings stacked on top of one another.

It carries out the reaction 3-dehydroquinate = 3-dehydroshikimate + H2O. It functions in the pathway aromatic compound metabolism; 3,4-dihydroxybenzoate biosynthesis; 3,4-dihydroxybenzoate from 3-dehydroquinate: step 1/2. In terms of biological role, is involved in the catabolism of quinate. Allows the utilization of quinate as carbon source via the beta-ketoadipate pathway. This Candida tropicalis (strain ATCC MYA-3404 / T1) (Yeast) protein is Catabolic 3-dehydroquinase.